The following is a 162-amino-acid chain: Succinate dehydrogenase assembly factor 2-A, mitochondrial (162 aa).

This sequence belongs to the SDHAF2 family. In terms of assembly, interacts with the flavoprotein subunit within the SDH catalytic dimer.

It is found in the mitochondrion matrix. In terms of biological role, plays an essential role in the assembly of succinate dehydrogenase (SDH), an enzyme complex (also referred to as respiratory complex II) that is a component of both the tricarboxylic acid (TCA) cycle and the mitochondrial electron transport chain, and which couples the oxidation of succinate to fumarate with the reduction of ubiquinone (coenzyme Q) to ubiquinol. Required for flavinylation (covalent attachment of FAD) of the flavoprotein subunit of the SDH catalytic dimer. The protein is Succinate dehydrogenase assembly factor 2-A, mitochondrial of Drosophila yakuba (Fruit fly).